The sequence spans 92 residues: Putative pterin-4-alpha-carbinolamine dehydratase (92 aa).

Belongs to the pterin-4-alpha-carbinolamine dehydratase family.

It catalyses the reaction (4aS,6R)-4a-hydroxy-L-erythro-5,6,7,8-tetrahydrobiopterin = (6R)-L-erythro-6,7-dihydrobiopterin + H2O. The sequence is that of Putative pterin-4-alpha-carbinolamine dehydratase from Acidobacterium capsulatum (strain ATCC 51196 / DSM 11244 / BCRC 80197 / JCM 7670 / NBRC 15755 / NCIMB 13165 / 161).